Here is a 532-residue protein sequence, read N- to C-terminus: Cytochrome P450 714B2 (532 aa).

Over 1–2 the chain is Lumenal; the sequence is ME. A helical; Signal-anchor for type III membrane protein membrane pass occupies residues 3 to 23; the sequence is VGMVVVVAAKVLVSLWCVGAC. At 24–532 the chain is on the cytoplasmic side; it reads CLAAYLYRVV…LTRVQGAYRH (509 aa). C474 serves as a coordination point for heme.

The protein belongs to the cytochrome P450 family. Requires heme as cofactor. In terms of tissue distribution, highly expressed in shoot, spikelet and uppermost internode. Detected in roots, leaves and anthers.

The protein localises to the membrane. Catalyzes the 13-hydroxylation of gibberellins (GAs). Determines the ratio of GA4 and GA1. Converts GA12 into GA53. This chain is Cytochrome P450 714B2 (CYP714B2), found in Oryza sativa subsp. japonica (Rice).